The chain runs to 273 residues: Octanoyl-[GcvH]:protein N-octanoyltransferase (273 aa).

Positions 40-245 constitute a BPL/LPL catalytic domain; that stretch reads ATEGAAIRSW…SLMELGATLT (206 aa). Cys144 (acyl-thioester intermediate) is an active-site residue.

The protein belongs to the octanoyltransferase LipL family.

It carries out the reaction N(6)-octanoyl-L-lysyl-[glycine-cleavage complex H protein] + L-lysyl-[lipoyl-carrier protein] = N(6)-octanoyl-L-lysyl-[lipoyl-carrier protein] + L-lysyl-[glycine-cleavage complex H protein]. The protein operates within protein modification; protein lipoylation via endogenous pathway; protein N(6)-(lipoyl)lysine from octanoyl-[acyl-carrier-protein]. Functionally, catalyzes the amidotransfer (transamidation) of the octanoyl moiety from octanoyl-GcvH to the lipoyl domain of the E2 subunit of lipoate-dependent enzymes. The chain is Octanoyl-[GcvH]:protein N-octanoyltransferase from Exiguobacterium sibiricum (strain DSM 17290 / CCUG 55495 / CIP 109462 / JCM 13490 / 255-15).